The chain runs to 353 residues: Mannonate dehydratase (353 aa).

It belongs to the mannonate dehydratase family. It depends on Fe(2+) as a cofactor. Mn(2+) serves as cofactor.

It carries out the reaction D-mannonate = 2-dehydro-3-deoxy-D-gluconate + H2O. It functions in the pathway carbohydrate metabolism; pentose and glucuronate interconversion. In terms of biological role, catalyzes the dehydration of D-mannonate. This is Mannonate dehydratase from Burkholderia cenocepacia (strain ATCC BAA-245 / DSM 16553 / LMG 16656 / NCTC 13227 / J2315 / CF5610) (Burkholderia cepacia (strain J2315)).